Here is a 237-residue protein sequence, read N- to C-terminus: Large ribosomal subunit protein uL1 (237 aa).

It belongs to the universal ribosomal protein uL1 family. Part of the 50S ribosomal subunit.

In terms of biological role, binds directly to 23S rRNA. The L1 stalk is quite mobile in the ribosome, and is involved in E site tRNA release. Protein L1 is also a translational repressor protein, it controls the translation of the L11 operon by binding to its mRNA. In Myxococcus xanthus (strain DK1622), this protein is Large ribosomal subunit protein uL1.